The following is a 309-amino-acid chain: MSIRIIPQDELGSSEKRTADMIPPLLFPRLKNLYNRRAERLRELAENNPLGDYLRFAALIAHAQEVVLYDHPLEMDLTARIKEASAQGKPPLDIHVLPRDKHWQKLLMALIAELKPEMSGPALAVIENLEKASTQELEDMASALFASDFSSVSSDKAPFIWAALSLYWAQMANLIPGKARAEYGEQRQYCPVCGSMPVSSMVQIGTTQGLRYLHCNLCETEWHVVRVKCSNCEQSGKLHYWSLDDEQAAIKAESCDDCGTYLKILYQEKDPKIEAVADDLASLVLDARMEQEGYARSSINPFLFPGEGE.

This sequence belongs to the FdhE family.

Its subcellular location is the cytoplasm. Functionally, necessary for formate dehydrogenase activity. In Escherichia coli O9:H4 (strain HS), this protein is Protein FdhE.